The chain runs to 687 residues: Putative secreted metallopeptidase (687 aa).

The first 22 residues, 1 to 22, serve as a signal peptide directing secretion; that stretch reads MLFTSTAVAALSGALLIQPALA. N54, N114, N252, N256, and N379 each carry an N-linked (GlcNAc...) asparagine glycan.

It belongs to the peptidase M10B family.

Its subcellular location is the secreted. The polypeptide is Putative secreted metallopeptidase (Arthroderma benhamiae (strain ATCC MYA-4681 / CBS 112371) (Trichophyton mentagrophytes)).